The primary structure comprises 451 residues: Signal recognition particle 54 kDa protein (451 aa).

Residues 105 to 112, 187 to 191, and 247 to 250 each bind GTP; these read GVQGTGKT, DTAGR, and TKMD.

Belongs to the GTP-binding SRP family. SRP54 subfamily. In terms of assembly, part of the signal recognition particle protein translocation system, which is composed of SRP and FtsY. Archaeal SRP consists of a 7S RNA molecule of 300 nucleotides and two protein subunits: SRP54 and SRP19.

The protein resides in the cytoplasm. The enzyme catalyses GTP + H2O = GDP + phosphate + H(+). Its function is as follows. Involved in targeting and insertion of nascent membrane proteins into the cytoplasmic membrane. Binds to the hydrophobic signal sequence of the ribosome-nascent chain (RNC) as it emerges from the ribosomes. The SRP-RNC complex is then targeted to the cytoplasmic membrane where it interacts with the SRP receptor FtsY. The sequence is that of Signal recognition particle 54 kDa protein from Acidianus ambivalens (Desulfurolobus ambivalens).